A 478-amino-acid chain; its full sequence is Solute carrier family 7 member 13 (478 aa).

Residues 1 to 14 (MAMDSKKEIRLKRE) are Cytoplasmic-facing. Residues 15-35 (LGYFWGTNFLIINIIGAGIFV) form a helical membrane-spanning segment. The Extracellular portion of the chain corresponds to 36-47 (SPKGVLQHSSMN). The chain crosses the membrane as a helical span at residues 48–68 (VGVSLCVWAVCAVLTLTSALC). Over 69–89 (SAEIGITFPYSGAHYYFLKRC) the chain is Cytoplasmic. A helical membrane pass occupies residues 90-110 (FGPLVAFLRLWTSLFLGPGLI). The Extracellular portion of the chain corresponds to 111–129 (ASQALLLAEYGVQPFYPSC). The chain crosses the membrane as a helical span at residues 130–150 (SAPILPRKCLALAMLWIVGIL). The Cytoplasmic segment spans residues 151-163 (NSRGVKELSWLQT). Residues 164–184 (VSSVLKVGILGVISLSGLFLL) traverse the membrane as a helical segment. The Extracellular segment spans residues 185-208 (VRGKKENVQRLQNAFDAEFPEVSQ). Residues 209-229 (LIEAIFQGYFAFSGGGCFTCI) form a helical membrane-spanning segment. The Cytoplasmic portion of the chain corresponds to 230–242 (AGELKKPSKTIPR). Residues 243 to 263 (CIFTGLPLVTVVYLLANISYL) form a helical membrane-spanning segment. Over 264 to 288 (TVLTPQEMLSSDAVALTWTDRVIPQ) the chain is Extracellular. A helical transmembrane segment spans residues 289–309 (FTWTVPFAISASLFINLVINV). Residues 310–338 (LETSRVLYIASENGQLPLLFCALNVHSSP) lie on the Cytoplasmic side of the membrane. The chain crosses the membrane as a helical span at residues 339–359 (FIAVLLIISMASILIVLTNLI). Aspartate 360 is a topological domain (extracellular). A helical transmembrane segment spans residues 361 to 381 (LINYLYFVVSIWTALSIIGIL). The Cytoplasmic segment spans residues 382–395 (KLRYQEPNLHRPYK). The chain crosses the membrane as a helical span at residues 396 to 416 (VFLPFTFIALGITLSLVLIPL). The Extracellular portion of the chain corresponds to 417–423 (VKSPKLH). The chain crosses the membrane as a helical span at residues 424 to 444 (YIYVFLFLLSGLVFYVPLIHF). Over 445 to 478 (KVKFVWFQKLTCYLQLLFNICIPDVSDDHIHEES) the chain is Cytoplasmic.

It belongs to the amino acid-polyamine-organocation (APC) superfamily. In terms of assembly, disulfide-linked heterodimer composed of the catalytic light subunit SLC7A13 and the heavy subunit SLC3A1. As to expression, expressed in renal tubules in the outer stripe of the outer medulla and medullary ray (at protein level). Detected in male but not in female kidney.

It is found in the apical cell membrane. It catalyses the reaction L-cystine(out) + L-aspartate(in) = L-cystine(in) + L-aspartate(out). It carries out the reaction L-cystine(out) = L-cystine(in). The catalysed reaction is L-aspartate(in) + L-glutamate(out) = L-aspartate(out) + L-glutamate(in). The enzyme catalyses L-aspartate(in) + L-glutamine(out) = L-aspartate(out) + L-glutamine(in). It catalyses the reaction L-aspartate(in) + L-methionine(out) = L-aspartate(out) + L-methionine(in). It carries out the reaction L-leucine(out) + L-aspartate(in) = L-leucine(in) + L-aspartate(out). The catalysed reaction is L-valine(out) + L-aspartate(in) = L-valine(in) + L-aspartate(out). The enzyme catalyses L-aspartate(in) + L-phenylalanine(out) = L-aspartate(out) + L-phenylalanine(in). It catalyses the reaction L-tyrosine(out) + L-aspartate(in) = L-tyrosine(in) + L-aspartate(out). It carries out the reaction L-tryptophan(out) + L-aspartate(in) = L-tryptophan(in) + L-aspartate(out). Associates with SLC3A1/rBAT to form a functional heterodimeric complex that transports anionic and neutral amino acids across the apical plasma membrane of renal epithelium. Preferentially mediates exchange transport, but can also operate via facilitated diffusion. May act as a major transporter for L-cystine in late proximal tubules, ensuring its reabsorption from the luminal fluid in exchange for cytosolic L-glutamate or L-aspartate. In Mus musculus (Mouse), this protein is Solute carrier family 7 member 13.